Reading from the N-terminus, the 629-residue chain is tRNA uridine 5-carboxymethylaminomethyl modification enzyme MnmG (629 aa).

Residues 15–20 (GAGHAG), V127, and S182 each bind FAD. The tract at residues 203–226 (TPPRVKSSTIDYSKTEEQPGDDHP) is disordered. The span at 215 to 226 (SKTEEQPGDDHP) shows a compositional bias: basic and acidic residues. 274-288 (GARYCPSIEDKIVRF) contacts NAD(+). Position 371 (Q371) interacts with FAD.

The protein belongs to the MnmG family. In terms of assembly, homodimer. Heterotetramer of two MnmE and two MnmG subunits. FAD serves as cofactor.

Its subcellular location is the cytoplasm. NAD-binding protein involved in the addition of a carboxymethylaminomethyl (cmnm) group at the wobble position (U34) of certain tRNAs, forming tRNA-cmnm(5)s(2)U34. This chain is tRNA uridine 5-carboxymethylaminomethyl modification enzyme MnmG, found in Listeria innocua serovar 6a (strain ATCC BAA-680 / CLIP 11262).